The sequence spans 307 residues: 4-hydroxy-tetrahydrodipicolinate synthase (307 aa).

Thr57 contributes to the pyruvate binding site. Tyr145 serves as the catalytic Proton donor/acceptor. The active-site Schiff-base intermediate with substrate is Lys173. Val215 is a pyruvate binding site.

It belongs to the DapA family. Homotetramer; dimer of dimers.

The protein resides in the cytoplasm. It carries out the reaction L-aspartate 4-semialdehyde + pyruvate = (2S,4S)-4-hydroxy-2,3,4,5-tetrahydrodipicolinate + H2O + H(+). Its pathway is amino-acid biosynthesis; L-lysine biosynthesis via DAP pathway; (S)-tetrahydrodipicolinate from L-aspartate: step 3/4. Its function is as follows. Catalyzes the condensation of (S)-aspartate-beta-semialdehyde [(S)-ASA] and pyruvate to 4-hydroxy-tetrahydrodipicolinate (HTPA). This Leptospira interrogans serogroup Icterohaemorrhagiae serovar copenhageni (strain Fiocruz L1-130) protein is 4-hydroxy-tetrahydrodipicolinate synthase.